We begin with the raw amino-acid sequence, 1608 residues long: Hemolysin (1608 aa).

Residues 1 to 30 form the signal peptide; the sequence is MKNNNFRLSAAGKLAAALAIILAASAGAYA. 6 disordered regions span residues 296 to 315, 452 to 488, 716 to 737, 971 to 1030, 1168 to 1199, and 1437 to 1469; these read SRVD…QNYR, KSSE…LRSE, EHTR…LSGG, AVNL…SASQ, AEST…TGGN, and PQQD…QGPL. Polar residues-rich tracts occupy residues 303–313 and 460–474; these read SNKNGGDNYQN and RNHT…WSNS. 2 stretches are compositionally biased toward basic and acidic residues: residues 478–488 and 716–726; these read ESLKASELRSE and EHTRDSEKTTR. Residues 727–736 show a composition bias toward polar residues; the sequence is TENSASSLSG. Residues 977–996 are compositionally biased toward basic and acidic residues; that stretch reads DSHRSEAAANRQDEQSRDTR. A compositionally biased stretch (polar residues) spans 1021 to 1030; the sequence is TQRSNSSASQ.

Its subcellular location is the cell outer membrane. Functionally, bacterial hemolysins are exotoxins that attack blood cell membranes and cause cell rupture by mechanisms not clearly defined. Its function is as follows. Cell-bound hemolysin, which releases heme-iron from erythrocytes by interaction with the erythrocyte membrane. ShlA requires ShlB function. The sequence is that of Hemolysin (shlA) from Serratia marcescens.